We begin with the raw amino-acid sequence, 302 residues long: Arginase (302 aa).

4 residues coordinate Mn(2+): H103, D126, H128, and D130. Substrate contacts are provided by residues H128 to N132, S139 to N141, and D180. 2 residues coordinate Mn(2+): D229 and D231. Residues T243 and E274 each coordinate substrate.

It belongs to the arginase family. It depends on Mn(2+) as a cofactor.

It catalyses the reaction L-arginine + H2O = urea + L-ornithine. Its pathway is nitrogen metabolism; urea cycle; L-ornithine and urea from L-arginine: step 1/1. The polypeptide is Arginase (arg) (Staphylococcus aureus (strain COL)).